Here is a 198-residue protein sequence, read N- to C-terminus: MAEFEYPQGFELIAGVDEVGRGPLVGAVVTAAVILDPNNPIDGLTDSKKLSEKKREKLAEEIKQKALAWALGRAEPEEIDALNILQATMLAMQRAIKNLKIQPHFVLIDGNRIPQLAIPAQAVVKGDSLVAEISAASIIAKVSRDHEMEVLDKQYPQYEFAKHKGYPTKVHLAKLAEFGVLPQHRRSFSPVRKLLENE.

One can recognise an RNase H type-2 domain in the interval 11–198; that stretch reads ELIAGVDEVG…SPVRKLLENE (188 aa). A divalent metal cation-binding residues include Asp-17, Glu-18, and Asp-109.

It belongs to the RNase HII family. Requires Mn(2+) as cofactor. Mg(2+) is required as a cofactor.

It localises to the cytoplasm. The catalysed reaction is Endonucleolytic cleavage to 5'-phosphomonoester.. Functionally, endonuclease that specifically degrades the RNA of RNA-DNA hybrids. The sequence is that of Ribonuclease HII from Mannheimia succiniciproducens (strain KCTC 0769BP / MBEL55E).